Here is a 279-residue protein sequence, read N- to C-terminus: Acetylglutamate kinase (279 aa).

Substrate-binding positions include 64–65 (GG), Arg86, and Asn177.

The protein belongs to the acetylglutamate kinase family. ArgB subfamily.

It localises to the cytoplasm. It catalyses the reaction N-acetyl-L-glutamate + ATP = N-acetyl-L-glutamyl 5-phosphate + ADP. The protein operates within amino-acid biosynthesis; L-arginine biosynthesis; N(2)-acetyl-L-ornithine from L-glutamate: step 2/4. Its function is as follows. Catalyzes the ATP-dependent phosphorylation of N-acetyl-L-glutamate. This is Acetylglutamate kinase from Campylobacter jejuni subsp. jejuni serotype O:6 (strain 81116 / NCTC 11828).